The sequence spans 155 residues: MVLDKEEGVPMLSVQPKGKQKGCAGCNRKIKDRYLLKALDKYWHEDCLKCACCDCRLGEVGSTLYTKANLILCRRDYLRLFGTTGNCAACSKLIPAFEMVMRARDNVYHLDCFACQLCNQRFCVGDKFFLKNNMILCQMDYEEGQLNGSFETQVQ.

2 LIM zinc-binding domains span residues Lys21 to Thr83 and Gly85 to Asn147.

The protein localises to the nucleus. Functionally, may be involved in gene regulation within neural lineage cells potentially by direct DNA binding or by binding to other transcription factors. This chain is Rhombotin-1, found in Danio rerio (Zebrafish).